The primary structure comprises 102 residues: Cytochrome b (102 aa).

3 helical membrane-spanning segments follow: residues 1-21 (FGSL…FLAM), 45-66 (WLIR…YLHI), and 81-101 (WNIG…GYVL). The heme b site is built by histidine 51 and histidine 65.

Belongs to the cytochrome b family. As to quaternary structure, the cytochrome bc1 complex contains 3 respiratory subunits (MT-CYB, CYC1 and UQCRFS1), 2 core proteins (UQCRC1 and UQCRC2) and probably 6 low-molecular weight proteins. Heme b serves as cofactor.

Its subcellular location is the mitochondrion inner membrane. In terms of biological role, component of the ubiquinol-cytochrome c reductase complex (complex III or cytochrome b-c1 complex) that is part of the mitochondrial respiratory chain. The b-c1 complex mediates electron transfer from ubiquinol to cytochrome c. Contributes to the generation of a proton gradient across the mitochondrial membrane that is then used for ATP synthesis. The polypeptide is Cytochrome b (mt-cyb) (Megalops atlanticus (Tarpon)).